Consider the following 666-residue polypeptide: UvrABC system protein B (666 aa).

The 388-residue stretch at 25 to 412 (NGIKNNNKWQ…SENIAEQVIR (388 aa)) folds into the Helicase ATP-binding domain. 38–45 (GVTGSGKT) lines the ATP pocket. The Beta-hairpin signature appears at 91-114 (YYDYYQPEAYVAQTDTYIEKDASI). The 167-residue stretch at 429–595 (QIDDLYSEIK…TIKKAVRDVI (167 aa)) folds into the Helicase C-terminal domain. Residues 622–657 (DKLIKEFEKEMKEAAKELQFEKAAYFRDKVNELKKK) form the UVR domain.

It belongs to the UvrB family. In terms of assembly, forms a heterotetramer with UvrA during the search for lesions. Interacts with UvrC in an incision complex.

Its subcellular location is the cytoplasm. Its function is as follows. The UvrABC repair system catalyzes the recognition and processing of DNA lesions. A damage recognition complex composed of 2 UvrA and 2 UvrB subunits scans DNA for abnormalities. Upon binding of the UvrA(2)B(2) complex to a putative damaged site, the DNA wraps around one UvrB monomer. DNA wrap is dependent on ATP binding by UvrB and probably causes local melting of the DNA helix, facilitating insertion of UvrB beta-hairpin between the DNA strands. Then UvrB probes one DNA strand for the presence of a lesion. If a lesion is found the UvrA subunits dissociate and the UvrB-DNA preincision complex is formed. This complex is subsequently bound by UvrC and the second UvrB is released. If no lesion is found, the DNA wraps around the other UvrB subunit that will check the other stand for damage. This chain is UvrABC system protein B, found in Clostridium acetobutylicum (strain ATCC 824 / DSM 792 / JCM 1419 / IAM 19013 / LMG 5710 / NBRC 13948 / NRRL B-527 / VKM B-1787 / 2291 / W).